Reading from the N-terminus, the 243-residue chain is Protein YagJ (243 aa).

The chain is Protein YagJ (yagJ) from Escherichia coli (strain K12).